We begin with the raw amino-acid sequence, 1006 residues long: Unconventional myosin-Id (1006 aa).

At A2 the chain carries N-acetylalanine. The region spanning 9-695 (FGKADFVLMD…TLFTLEELRA (687 aa)) is the Myosin motor domain. 102–109 (GESGAGKT) contributes to the ATP binding site. S200 carries the post-translational modification Phosphoserine. The residue at position 536 (Y536) is a Phosphotyrosine. The actin-binding stretch occupies residues 572–594 (MIALVDNLASKEPYYVRCIKPND). 2 consecutive IQ domains span residues 699-719 (IRIV…MRYK) and 721-741 (TKAA…SYIQ). Positions 812–1005 (GQRADLGLQR…RSGFILSVPG (194 aa)) constitute a TH1 domain.

It belongs to the TRAFAC class myosin-kinesin ATPase superfamily. Myosin family. Interacts (via the two IQ motifs) with calmodulin. Binds an additional calmodulin chain via a third, C-terminal region. Interacts with F-actin.

It is found in the cytoplasm. The protein resides in the perikaryon. The protein localises to the cell projection. It localises to the dendrite. Its subcellular location is the early endosome. It is found in the cell cortex. In terms of biological role, unconventional myosin that functions as actin-based motor protein with ATPase activity. Plays a role in endosomal protein trafficking, and especially in the transfer of cargo proteins from early to recycling endosomes. Required for normal planar cell polarity in ciliated tracheal cells, for normal rotational polarity of cilia, and for coordinated, unidirectional ciliary movement in the trachea. Required for normal, polarized cilia organization in brain ependymal epithelial cells. This is Unconventional myosin-Id (MYO1D) from Canis lupus familiaris (Dog).